Reading from the N-terminus, the 492-residue chain is Bifunctional purine biosynthesis protein PurH (492 aa).

Positions 1–144 (MKKAILSVSN…KNYKHVTTIV (144 aa)) constitute an MGS-like domain.

Belongs to the PurH family.

It catalyses the reaction (6R)-10-formyltetrahydrofolate + 5-amino-1-(5-phospho-beta-D-ribosyl)imidazole-4-carboxamide = 5-formamido-1-(5-phospho-D-ribosyl)imidazole-4-carboxamide + (6S)-5,6,7,8-tetrahydrofolate. The enzyme catalyses IMP + H2O = 5-formamido-1-(5-phospho-D-ribosyl)imidazole-4-carboxamide. It participates in purine metabolism; IMP biosynthesis via de novo pathway; 5-formamido-1-(5-phospho-D-ribosyl)imidazole-4-carboxamide from 5-amino-1-(5-phospho-D-ribosyl)imidazole-4-carboxamide (10-formyl THF route): step 1/1. The protein operates within purine metabolism; IMP biosynthesis via de novo pathway; IMP from 5-formamido-1-(5-phospho-D-ribosyl)imidazole-4-carboxamide: step 1/1. The sequence is that of Bifunctional purine biosynthesis protein PurH from Staphylococcus aureus (strain MSSA476).